A 225-amino-acid polypeptide reads, in one-letter code: Leucyl/phenylalanyl-tRNA--protein transferase (225 aa).

The protein belongs to the L/F-transferase family.

It localises to the cytoplasm. It carries out the reaction N-terminal L-lysyl-[protein] + L-leucyl-tRNA(Leu) = N-terminal L-leucyl-L-lysyl-[protein] + tRNA(Leu) + H(+). The enzyme catalyses N-terminal L-arginyl-[protein] + L-leucyl-tRNA(Leu) = N-terminal L-leucyl-L-arginyl-[protein] + tRNA(Leu) + H(+). The catalysed reaction is L-phenylalanyl-tRNA(Phe) + an N-terminal L-alpha-aminoacyl-[protein] = an N-terminal L-phenylalanyl-L-alpha-aminoacyl-[protein] + tRNA(Phe). In terms of biological role, functions in the N-end rule pathway of protein degradation where it conjugates Leu, Phe and, less efficiently, Met from aminoacyl-tRNAs to the N-termini of proteins containing an N-terminal arginine or lysine. This Rhodopseudomonas palustris (strain TIE-1) protein is Leucyl/phenylalanyl-tRNA--protein transferase.